We begin with the raw amino-acid sequence, 445 residues long: C-terminal-binding protein 2 (445 aa).

R22 bears the Asymmetric dimethylarginine mark. NAD(+)-binding positions include S106, 186–191 (IGFGRT), D210, 243–249 (CNLNEHN), 270–272 (AAR), and D296. The active site involves R272. Residue E301 is part of the active site. The Proton donor role is filled by H321. 321-324 (HTAW) is an NAD(+) binding site. The interval 414 to 445 (THNLPTVAHPSQAPSPNQPTKHGDNREHPNEQ) is disordered. S428 carries the post-translational modification Phosphoserine; by HIPK2. The segment covering 434–445 (KHGDNREHPNEQ) has biased composition (basic and acidic residues).

It belongs to the D-isomer specific 2-hydroxyacid dehydrogenase family. In terms of assembly, interacts with HIPK2 and PNN. Interacts with the transcription factors ZNF217, BKLF, delta EF1/AREB6/ZEB, EVI-1 and Friend of GATA (FOG) via the consensus motif P-X-[DNS]-L-[STVA]. Also interacts with the C-terminus of adenovirus E1A protein. Can form a complex with BKLF on a CACCC-box oligonucleotide. Can form homodimers or heterodimers of CTBP1 and CTBP2. Interacts with NRIP1 and WIZ. Interacts with PRDM16; represses white adipose tissue (WAT)-specific genes expression. Interacts with MCRIP1. Phosphorylation by HIPK2 on Ser-428 induces proteasomal degradation. In terms of tissue distribution, found in all tissues except spleen and liver.

The protein resides in the nucleus. The protein localises to the synapse. Corepressor targeting diverse transcription regulators. Isoform 2 probably acts as a scaffold for specialized synapses. Functions in brown adipose tissue (BAT) differentiation. This chain is C-terminal-binding protein 2 (Ctbp2), found in Mus musculus (Mouse).